Consider the following 299-residue polypeptide: Ribosomal protein L11 methyltransferase (299 aa).

4 residues coordinate S-adenosyl-L-methionine: Thr-150, Gly-171, Asp-193, and Asn-234.

This sequence belongs to the methyltransferase superfamily. PrmA family.

It is found in the cytoplasm. It carries out the reaction L-lysyl-[protein] + 3 S-adenosyl-L-methionine = N(6),N(6),N(6)-trimethyl-L-lysyl-[protein] + 3 S-adenosyl-L-homocysteine + 3 H(+). Functionally, methylates ribosomal protein L11. In Dictyoglomus turgidum (strain DSM 6724 / Z-1310), this protein is Ribosomal protein L11 methyltransferase.